Here is a 962-residue protein sequence, read N- to C-terminus: Glycine dehydrogenase (decarboxylating) (962 aa).

K709 is modified (N6-(pyridoxal phosphate)lysine).

This sequence belongs to the GcvP family. In terms of assembly, the glycine cleavage system is composed of four proteins: P, T, L and H. It depends on pyridoxal 5'-phosphate as a cofactor.

The enzyme catalyses N(6)-[(R)-lipoyl]-L-lysyl-[glycine-cleavage complex H protein] + glycine + H(+) = N(6)-[(R)-S(8)-aminomethyldihydrolipoyl]-L-lysyl-[glycine-cleavage complex H protein] + CO2. Its function is as follows. The glycine cleavage system catalyzes the degradation of glycine. The P protein binds the alpha-amino group of glycine through its pyridoxal phosphate cofactor; CO(2) is released and the remaining methylamine moiety is then transferred to the lipoamide cofactor of the H protein. In Shewanella putrefaciens (strain CN-32 / ATCC BAA-453), this protein is Glycine dehydrogenase (decarboxylating).